The primary structure comprises 643 residues: uncharacterized protein (643 aa).

The helical transmembrane segment at 9–29 (IVLALLLLLLPVVCGDVSVYK) threads the bilayer.

It localises to the membrane. This is an uncharacterized protein from Methanocaldococcus jannaschii (strain ATCC 43067 / DSM 2661 / JAL-1 / JCM 10045 / NBRC 100440) (Methanococcus jannaschii).